We begin with the raw amino-acid sequence, 125 residues long: Large-conductance mechanosensitive channel (125 aa).

2 helical membrane-spanning segments follow: residues 14–34 and 67–87; these read VIDL…VQSL and GSFL…FLIV.

The protein belongs to the MscL family. In terms of assembly, homopentamer.

The protein localises to the cell membrane. In terms of biological role, channel that opens in response to stretch forces in the membrane lipid bilayer. May participate in the regulation of osmotic pressure changes within the cell. The polypeptide is Large-conductance mechanosensitive channel (Lactobacillus helveticus (strain DPC 4571)).